Consider the following 865-residue polypeptide: Anaphase-promoting complex subunit 6 (865 aa).

TPR repeat units lie at residues 11–42 (IEKQ…LNLV), 46–75 (SKEY…LIQK), and 88–149 (EDYQ…LQIL). Residues 153 to 293 (NDSSENMDDE…NNNNNNNNNF (141 aa)) form a disordered region. Over residues 183-202 (NCDDDDDDDDDDDDDDDDEK) the composition is skewed to acidic residues. Residues 249–292 (NKNNNKNNNNNNNNNNNNNNNNNNNNNNNNNNNNNNNNNNNNNN) show a composition bias toward low complexity. TPR repeat units follow at residues 300–331 (IRSS…ALLT), 336–359 (FEAF…LLEK), 366–438 (DSWI…DIST), 478–506 (DIQT…ILKQ), 515–542 (CLMV…LVDS), 573–602 (AISW…STTL), 607–635 (GASW…TSSR), 642–670 (LPLL…AKDI), and 675–709 (PMIF…KIKS). Residues 403 to 434 (SNNNTFGANNNNNNNNNNNNNNNNNNNNNSNN) are compositionally biased toward low complexity. The disordered stretch occupies residues 403–436 (SNNNTFGANNNNNNNNNNNNNNNNNNNNNSNNDI). The segment at 738-767 (GIGNNNNNNNNRRTTTTTTTTSNNQKKNSS) is disordered. TPR repeat units follow at residues 777–809 (ESWE…SLSL) and 814–843 (PSTY…SLSI).

Belongs to the APC6/CDC16 family. The APC/C is composed of at least 13 subunits that stay tightly associated throughout the cell cycle: anapc1, anapc2, anapc3, anapc4, anapc5, anapc6, anapc7, anapc8, anapc10, anapc11, cdc20, cdc26 and cdh1.

It is found in the nucleus. It participates in protein modification; protein ubiquitination. Component of the anaphase promoting complex/cyclosome (APC/C), a cell cycle-regulated E3 ubiquitin-protein ligase complex that controls progression through mitosis and the G1 phase of the cell cycle. This chain is Anaphase-promoting complex subunit 6 (anapc6), found in Dictyostelium discoideum (Social amoeba).